Consider the following 696-residue polypeptide: SEC14 domain and spectrin repeat-containing protein 1 (696 aa).

The CRAL-TRIO domain occupies 1 to 153 (MDATVILPIL…EFGGSLTYDH (153 aa)). Spectrin repeat units lie at residues 272-378 (TQLD…NLLQ), 381-494 (LDFH…LKML), and 500-602 (FKCE…HRLE).

This sequence belongs to the SOLO family.

Functionally, may act as the primary docking protein directing membrane turnover and assembly of the transient receptor potential channels trpc4 and trpc5. Binds phospholipids. This is SEC14 domain and spectrin repeat-containing protein 1 (sestd1) from Xenopus tropicalis (Western clawed frog).